A 220-amino-acid chain; its full sequence is MSGSTTGCGGPCGACKFLRRKCVADCVFAPYFDSVEGTSHFTAVHKVFGASNASKLLMMIPASRRLDAVVTLTYEALARLRDPVYGCVGHIFALQHQVMNLQAELAYVQTQLSTLQGLPPPNSQNNSRTEAASSSNVPLISSVDSKDNMSSSSSHIPCMSQQQEQEQPKEAIEVPTESVDLSTFFGLENPVDEDGDLNALAREFFTKYLTGGKYRPSSLI.

Residues Gly-10–Leu-112 form the LOB domain. Residues Gly-117–Ile-172 are disordered. Over residues Ser-123–Leu-139 the composition is skewed to polar residues.

The protein belongs to the LOB domain-containing protein family. In terms of tissue distribution, expressed in roots, stems and flowers.

The sequence is that of LOB domain-containing protein 31 (LBD31) from Arabidopsis thaliana (Mouse-ear cress).